A 182-amino-acid polypeptide reads, in one-letter code: Lipoprotein signal peptidase (182 aa).

4 helical membrane passes run L15–I35, L44–G64, A65–I85, and P97–V117. Active-site residues include D140 and D162. A helical transmembrane segment spans residues W155–T175.

Belongs to the peptidase A8 family.

The protein resides in the cell inner membrane. It carries out the reaction Release of signal peptides from bacterial membrane prolipoproteins. Hydrolyzes -Xaa-Yaa-Zaa-|-(S,diacylglyceryl)Cys-, in which Xaa is hydrophobic (preferably Leu), and Yaa (Ala or Ser) and Zaa (Gly or Ala) have small, neutral side chains.. It participates in protein modification; lipoprotein biosynthesis (signal peptide cleavage). In terms of biological role, this protein specifically catalyzes the removal of signal peptides from prolipoproteins. This Leptospira borgpetersenii serovar Hardjo-bovis (strain L550) protein is Lipoprotein signal peptidase.